Here is a 306-residue protein sequence, read N- to C-terminus: Lipid A biosynthesis lauroyltransferase (306 aa).

The chain crosses the membrane as a helical span at residues 17–37 (WLTWLGIGVLWLVVQLPYPVI). An HXXXXD motif motif is present at residues 132 to 137 (HFLTLE).

It belongs to the LpxL/LpxM/LpxP family. Monomer.

It localises to the cell inner membrane. It catalyses the reaction dodecanoyl-[ACP] + alpha-Kdo-(2-&gt;4)-alpha-Kdo-(2-&gt;6)-lipid IVA (E. coli) = alpha-Kdo-(2-&gt;4)-alpha-Kdo-(2-&gt;6)-(dodecanoyl)-lipid IVA (E. coli) + holo-[ACP]. It participates in glycolipid biosynthesis; KDO(2)-lipid A biosynthesis; KDO(2)-lipid A from CMP-3-deoxy-D-manno-octulosonate and lipid IV(A): step 3/4. The protein operates within bacterial outer membrane biogenesis; lipopolysaccharide biosynthesis. Catalyzes the transfer of laurate from lauroyl-[acyl-carrier-protein] (ACP) to Kdo(2)-lipid IV(A) to form Kdo(2)-(lauroyl)-lipid IV(A). Has 10 fold selectivity for lauroyl-ACP over myristoyl-ACP. In vitro, can also catalyze a slow second acylation reaction leading to the formation of Kdo(2)-(dilauroyl)-lipid IV(A). The chain is Lipid A biosynthesis lauroyltransferase from Escherichia coli (strain K12).